A 120-amino-acid polypeptide reads, in one-letter code: Dihydroneopterin triphosphate 2'-epimerase (120 aa).

It belongs to the DHNA family. In terms of assembly, homooctamer.

It carries out the reaction 7,8-dihydroneopterin 3'-triphosphate = 7,8-dihydromonapterin 3'-triphosphate. Catalyzes the epimerization of carbon 2' of the side chain of 7,8-dihydroneopterin triphosphate (H2NTP) to form 7,8-dihydromonapterin triphosphate (H2MTP). Is required for tetrahydromonapterin biosynthesis. The polypeptide is Dihydroneopterin triphosphate 2'-epimerase (folX) (Escherichia coli O157:H7).